The primary structure comprises 106 residues: UPF0145 protein Cthe_0398 (106 aa).

It belongs to the UPF0145 family.

The polypeptide is UPF0145 protein Cthe_0398 (Acetivibrio thermocellus (strain ATCC 27405 / DSM 1237 / JCM 9322 / NBRC 103400 / NCIMB 10682 / NRRL B-4536 / VPI 7372) (Clostridium thermocellum)).